Here is a 67-residue protein sequence, read N- to C-terminus: Large ribosomal subunit protein bL32 (67 aa).

Positions 1-19 (MAVPKRKMSRSNTRARRSQ) are enriched in basic residues. Residues 1–21 (MAVPKRKMSRSNTRARRSQWK) form a disordered region.

Belongs to the bacterial ribosomal protein bL32 family.

This is Large ribosomal subunit protein bL32 from Clavibacter michiganensis subsp. michiganensis (strain NCPPB 382).